The following is a 436-amino-acid chain: GTPase Der (436 aa).

EngA-type G domains lie at 4–167 (PVVA…PKEE) and 176–351 (VKFS…DNHS). GTP contacts are provided by residues 10-17 (GRPNVGKS), 57-61 (DTGGI), 119-122 (NKVD), 182-189 (GRPNVGKS), 229-233 (DTAGM), and 294-297 (NKWD). The region spanning 352 to 436 (LRVQSSMLND…PIRVIARKRK (85 aa)) is the KH-like domain.

The protein belongs to the TRAFAC class TrmE-Era-EngA-EngB-Septin-like GTPase superfamily. EngA (Der) GTPase family. In terms of assembly, associates with the 50S ribosomal subunit.

In terms of biological role, GTPase that plays an essential role in the late steps of ribosome biogenesis. This is GTPase Der from Listeria monocytogenes serotype 4b (strain F2365).